Consider the following 473-residue polypeptide: Bifunctional protein HldE (473 aa).

The segment at 1–318 (MKLTLPRYDQ…RAVQREEGSE (318 aa)) is ribokinase. 194 to 197 (NLHE) contributes to the ATP binding site. Aspartate 263 is a catalytic residue. Residues 343–473 (FTNGCFDILH…TAIVEKIRNK (131 aa)) form a cytidylyltransferase region.

The protein in the N-terminal section; belongs to the carbohydrate kinase PfkB family. It in the C-terminal section; belongs to the cytidylyltransferase family. As to quaternary structure, homodimer.

The catalysed reaction is D-glycero-beta-D-manno-heptose 7-phosphate + ATP = D-glycero-beta-D-manno-heptose 1,7-bisphosphate + ADP + H(+). It catalyses the reaction D-glycero-beta-D-manno-heptose 1-phosphate + ATP + H(+) = ADP-D-glycero-beta-D-manno-heptose + diphosphate. It functions in the pathway nucleotide-sugar biosynthesis; ADP-L-glycero-beta-D-manno-heptose biosynthesis; ADP-L-glycero-beta-D-manno-heptose from D-glycero-beta-D-manno-heptose 7-phosphate: step 1/4. It participates in nucleotide-sugar biosynthesis; ADP-L-glycero-beta-D-manno-heptose biosynthesis; ADP-L-glycero-beta-D-manno-heptose from D-glycero-beta-D-manno-heptose 7-phosphate: step 3/4. Catalyzes the phosphorylation of D-glycero-D-manno-heptose 7-phosphate at the C-1 position to selectively form D-glycero-beta-D-manno-heptose-1,7-bisphosphate. Functionally, catalyzes the ADP transfer from ATP to D-glycero-beta-D-manno-heptose 1-phosphate, yielding ADP-D-glycero-beta-D-manno-heptose. The polypeptide is Bifunctional protein HldE (Ectopseudomonas mendocina (strain ymp) (Pseudomonas mendocina)).